Reading from the N-terminus, the 345-residue chain is DNA-directed RNA polymerase subunit alpha (345 aa).

Positions 1–241 (MLRDTHLALQ…DQLGMFINFE (241 aa)) are alpha N-terminal domain (alpha-NTD). Residues 257 to 345 (FNPNLLRKVD…ELVKRSDNPF (89 aa)) form an alpha C-terminal domain (alpha-CTD) region.

This sequence belongs to the RNA polymerase alpha chain family. In terms of assembly, homodimer. The RNAP catalytic core consists of 2 alpha, 1 beta, 1 beta' and 1 omega subunit. When a sigma factor is associated with the core the holoenzyme is formed, which can initiate transcription.

The catalysed reaction is RNA(n) + a ribonucleoside 5'-triphosphate = RNA(n+1) + diphosphate. Its function is as follows. DNA-dependent RNA polymerase catalyzes the transcription of DNA into RNA using the four ribonucleoside triphosphates as substrates. This is DNA-directed RNA polymerase subunit alpha from Acidiphilium cryptum (strain JF-5).